Consider the following 506-residue polypeptide: Voltage-gated potassium channel regulatory subunit KCNG4 (506 aa).

The Cytoplasmic portion of the chain corresponds to 1–216; that stretch reads MPMSSRDRDL…EMVEDPQSGL (216 aa). A helical membrane pass occupies residues 217 to 238; the sequence is PGKVFACLSVLFVATTAVSLCV. At 239–259 the chain is on the extracellular side; it reads STMPDFRAEEGKGECTRKCYY. The helical transmembrane segment at 260–281 threads the bilayer; the sequence is IFVVESICVAWFSLEFCLRFVQ. Over 282-292 the chain is Cytoplasmic; sequence APNKCQFFRGP. The helical transmembrane segment at 293 to 312 threads the bilayer; it reads LNVIDILAISPYYVSLAVSD. Residues 313–326 lie on the Extracellular side of the membrane; the sequence is ESPEAGERPSSSSY. Residues 327-351 form a helical; Voltage-sensor membrane-spanning segment; that stretch reads LEKVGLVLRVLRALRILYVMRLARH. At 352 to 366 the chain is on the cytoplasmic side; it reads SLGLQTLGLTVRRCA. The chain crosses the membrane as a helical span at residues 367-388; sequence REFGLLMLFLAVAVTLFSPLVY. The Extracellular segment spans residues 389–403; that stretch reads VAENESGRVLEFTSI. An intramembrane region (helical) is located at residues 404–415; the sequence is PASYWWAIISMT. Residues 416-421 carry the Selectivity filter motif; it reads TVGYGD. Residues 416-423 lie within the membrane without spanning it; sequence TVGYGDMV. At 424–430 the chain is on the extracellular side; that stretch reads PRSVPGQ. Residues 431–459 traverse the membrane as a helical segment; the sequence is MVALSSILSGILIMAFPATSIFHTFSHSY. Residues 460–506 lie on the Cytoplasmic side of the membrane; the sequence is LELKREQEQVQARLRRLQNTNSASERELLSDVDDLVPEGLTSPGRYM.

The protein belongs to the potassium channel family. G (TC 1.A.1.2) subfamily. Kv6.4/KCNG4 sub-subfamily. Heterotetramer with KCNB1. Does not form homomultimer.

It is found in the cell membrane. Regulatory subunit of the voltage-gated potassium (Kv) channel which, when coassembled with KCNB1, modulates the kinetics parameters of the heterotetrameric channel namely the time course of activation, deactivation and inactivation and on the voltage-dependence of activation. Potassium channel subunit that does not form functional channels by itself. Reduces the deactivation rate. Modulates the threshold for activation by shifting by approximately 20 mV in hyperpolarizing direction. Markedly changes the inactivation by shifting the voltage dependence of inactivation by approximately 40 mV in hyperpolarizing direction. Acceleratee activation and enhances the time course of activation. The polypeptide is Voltage-gated potassium channel regulatory subunit KCNG4 (Mus musculus (Mouse)).